We begin with the raw amino-acid sequence, 535 residues long: 2-isopropylmalate synthase (535 aa).

In terms of domain architecture, Pyruvate carboxyltransferase spans 13–274; it reads VLIFDTTLRD…YFNPFLGRPP (262 aa). The Mn(2+) site is built by Asp22, His213, His215, and Asn249. The regulatory domain stretch occupies residues 414-535; it reads QLEFVQVSCG…LEQRALHPQA (122 aa).

It belongs to the alpha-IPM synthase/homocitrate synthase family. LeuA type 1 subfamily. Homodimer. The cofactor is Mn(2+).

The protein localises to the cytoplasm. It carries out the reaction 3-methyl-2-oxobutanoate + acetyl-CoA + H2O = (2S)-2-isopropylmalate + CoA + H(+). The protein operates within amino-acid biosynthesis; L-leucine biosynthesis; L-leucine from 3-methyl-2-oxobutanoate: step 1/4. Its function is as follows. Catalyzes the condensation of the acetyl group of acetyl-CoA with 3-methyl-2-oxobutanoate (2-ketoisovalerate) to form 3-carboxy-3-hydroxy-4-methylpentanoate (2-isopropylmalate). This is 2-isopropylmalate synthase from Thermosynechococcus vestitus (strain NIES-2133 / IAM M-273 / BP-1).